Reading from the N-terminus, the 248-residue chain is MTEGARSTIDQGEVDRFSAMAAEWWSPTGKFKPLHKFNPVRLAYIRDKACANFGRDQKSPRPLEGLRVLDIGCGGGLLSEPVARMGASVVGADPSDKNIGIASTHAKASGVPVDYRAVTAEELAEAGETFDIVLNMEVVEHVADVEFFMTTCAKMVRPGGLIFVATINRTMKAAALAIFAAENILRWLPRGTHQYEKLVRPEELEKPLAASGLEITDRTGVFFNPLSNQWNLSRDMDVNYMLLGKRPA.

Positions 41, 72, 93, and 136 each coordinate S-adenosyl-L-methionine.

The protein belongs to the methyltransferase superfamily. UbiG/COQ3 family.

It catalyses the reaction a 3-demethylubiquinol + S-adenosyl-L-methionine = a ubiquinol + S-adenosyl-L-homocysteine + H(+). The enzyme catalyses a 3-(all-trans-polyprenyl)benzene-1,2-diol + S-adenosyl-L-methionine = a 2-methoxy-6-(all-trans-polyprenyl)phenol + S-adenosyl-L-homocysteine + H(+). The protein operates within cofactor biosynthesis; ubiquinone biosynthesis. Its function is as follows. O-methyltransferase that catalyzes the 2 O-methylation steps in the ubiquinone biosynthetic pathway. This is Ubiquinone biosynthesis O-methyltransferase from Rhizobium etli (strain CIAT 652).